Reading from the N-terminus, the 311-residue chain is 3-oxo-4,17-pregnadiene-20-carboxyl-CoA hydratase alpha subunit (311 aa).

Residues 198–295 (WDGVKAHELR…VAIGMPVRAT (98 aa)) are DUF35.

It belongs to the thioester dehydratase family. As to quaternary structure, heterodimer composed of ChsH1 and ChsH2. Two heterodimers combine to form a heterotetramer. The complex interacts with Ltp2 via the DUF35 C-terminal region of ChsH2. The ChsH1-ChsH2-Ltp2 protein complex is composed of two protomers that form a heterohexameric structure through the Ltp2 dimerization interface.

It catalyses the reaction 3-oxochola-4,17-dien-22-oyl-CoA + H2O = 17-hydroxy-3-oxochol-4-en-22-oyl-CoA. The enzyme catalyses (2E)-octenoyl-CoA + H2O = 3-hydroxyoctanoyl-CoA. The catalysed reaction is (2E)-decenoyl-CoA + H2O = 3-hydroxydecanoyl-CoA. It participates in steroid metabolism; cholesterol degradation. Its activity is regulated as follows. In the absence of the Ltp2 aldolase, ChsH1/ChsH2 can hydrate only about 30% of the 3-OPDC-CoA substrate. Complete turnover requires the presence of Ltp2. Its function is as follows. Involved in cholesterol side chain degradation. Catalyzes the hydration of 3-oxo-4,17-pregnadiene-20-carboxyl-CoA (3-OPDC-CoA) to form 17-hydroxy-3-oxo-4-pregnene-20-carboxyl-CoA (17-HOPC-CoA), in the modified beta-oxidation pathway for cholesterol side chain degradation. Can also use octenoyl-CoA and decenoyl-CoA, with lower efficiency. In Mycobacterium tuberculosis (strain ATCC 25618 / H37Rv), this protein is 3-oxo-4,17-pregnadiene-20-carboxyl-CoA hydratase alpha subunit.